The primary structure comprises 481 residues: Arginine biosynthesis bifunctional protein ArgJ, chloroplastic (481 aa).

Positions 225, 251, 262, 349, 476, and 481 each coordinate substrate. The active-site Nucleophile is the threonine 262.

This sequence belongs to the ArgJ family. In terms of assembly, heterodimer of an alpha and a beta chain.

It is found in the plastid. The protein resides in the chloroplast. It catalyses the reaction N(2)-acetyl-L-ornithine + L-glutamate = N-acetyl-L-glutamate + L-ornithine. The catalysed reaction is L-glutamate + acetyl-CoA = N-acetyl-L-glutamate + CoA + H(+). Its pathway is amino-acid biosynthesis; L-arginine biosynthesis; L-ornithine and N-acetyl-L-glutamate from L-glutamate and N(2)-acetyl-L-ornithine (cyclic): step 1/1. It functions in the pathway amino-acid biosynthesis; L-arginine biosynthesis; N(2)-acetyl-L-ornithine from L-glutamate: step 1/4. Its function is as follows. Catalyzes two activities which are involved in the cyclic version of arginine biosynthesis: the synthesis of acetylglutamate from glutamate and acetyl-CoA, and of ornithine by transacetylation between acetylornithine and glutamate. This Populus trichocarpa (Western balsam poplar) protein is Arginine biosynthesis bifunctional protein ArgJ, chloroplastic.